A 439-amino-acid polypeptide reads, in one-letter code: Adenylosuccinate synthetase (439 aa).

GTP contacts are provided by residues 12-18 and 40-42; these read GDEGKGK and GHT. D13 functions as the Proton acceptor in the catalytic mechanism. Mg(2+)-binding residues include D13 and G40. Residues 13–16, 38–41, T137, R151, Q232, T247, and R311 each bind IMP; these read DEGK and NAGH. The active-site Proton donor is H41. 307–313 contributes to the substrate binding site; the sequence is ATTGRPR. GTP contacts are provided by residues R313, 339-341, and 421-423; these read KLD and SNG.

This sequence belongs to the adenylosuccinate synthetase family. In terms of assembly, homodimer. It depends on Mg(2+) as a cofactor.

The protein resides in the cytoplasm. It carries out the reaction IMP + L-aspartate + GTP = N(6)-(1,2-dicarboxyethyl)-AMP + GDP + phosphate + 2 H(+). The protein operates within purine metabolism; AMP biosynthesis via de novo pathway; AMP from IMP: step 1/2. Functionally, plays an important role in the de novo pathway of purine nucleotide biosynthesis. Catalyzes the first committed step in the biosynthesis of AMP from IMP. This Salinibacter ruber (strain DSM 13855 / M31) protein is Adenylosuccinate synthetase.